Reading from the N-terminus, the 491-residue chain is Protein nucleotidyltransferase YdiU (491 aa).

ATP is bound by residues glycine 94, glycine 96, arginine 97, lysine 117, aspartate 129, glycine 130, arginine 180, and arginine 187. Aspartate 256 (proton acceptor) is an active-site residue. 2 residues coordinate Mg(2+): asparagine 257 and aspartate 266. Residue aspartate 266 coordinates ATP.

It belongs to the SELO family. Requires Mg(2+) as cofactor. It depends on Mn(2+) as a cofactor.

It catalyses the reaction L-seryl-[protein] + ATP = 3-O-(5'-adenylyl)-L-seryl-[protein] + diphosphate. The catalysed reaction is L-threonyl-[protein] + ATP = 3-O-(5'-adenylyl)-L-threonyl-[protein] + diphosphate. The enzyme catalyses L-tyrosyl-[protein] + ATP = O-(5'-adenylyl)-L-tyrosyl-[protein] + diphosphate. It carries out the reaction L-histidyl-[protein] + UTP = N(tele)-(5'-uridylyl)-L-histidyl-[protein] + diphosphate. It catalyses the reaction L-seryl-[protein] + UTP = O-(5'-uridylyl)-L-seryl-[protein] + diphosphate. The catalysed reaction is L-tyrosyl-[protein] + UTP = O-(5'-uridylyl)-L-tyrosyl-[protein] + diphosphate. Functionally, nucleotidyltransferase involved in the post-translational modification of proteins. It can catalyze the addition of adenosine monophosphate (AMP) or uridine monophosphate (UMP) to a protein, resulting in modifications known as AMPylation and UMPylation. This chain is Protein nucleotidyltransferase YdiU, found in Alkaliphilus metalliredigens (strain QYMF).